The primary structure comprises 29 residues: Toxin II.9 (29 aa).

In terms of domain architecture, LCN-type CS-alpha/beta spans 2–29 (KDGYLVNKYTGCKVNCYKLGENKFCNRE).

The protein belongs to the long (4 C-C) scorpion toxin superfamily. Sodium channel inhibitor family. Beta subfamily. As to expression, expressed by the venom gland.

The protein localises to the secreted. In terms of biological role, binds to sodium channels (Nav) and shift the voltage of activation toward more negative potentials. This toxin is active on crustaceans. This Centruroides limpidus (Mexican scorpion) protein is Toxin II.9.